Reading from the N-terminus, the 206-residue chain is Adenine phosphoribosyltransferase (206 aa).

It belongs to the purine/pyrimidine phosphoribosyltransferase family. As to quaternary structure, homodimer.

The protein localises to the cytoplasm. The catalysed reaction is AMP + diphosphate = 5-phospho-alpha-D-ribose 1-diphosphate + adenine. The protein operates within purine metabolism; AMP biosynthesis via salvage pathway; AMP from adenine: step 1/1. Its function is as follows. Catalyzes a salvage reaction resulting in the formation of AMP, that is energically less costly than de novo synthesis. The chain is Adenine phosphoribosyltransferase from Burkholderia mallei (strain NCTC 10229).